A 476-amino-acid polypeptide reads, in one-letter code: Inosine-5'-monophosphate dehydrogenase (476 aa).

2 consecutive CBS domains span residues 93 to 151 and 152 to 211; these read IIRD…VKDI and MTKD…TRDE. Residues D242 and 292–294 each bind NAD(+); that span reads GIG. The K(+) site is built by G294 and G296. S297 is an IMP binding site. A K(+)-binding site is contributed by C299. C299 functions as the Thioimidate intermediate in the catalytic mechanism. IMP-binding positions include 334–336, 357–358, and 381–385; these read DGG, GY, and YRGMG. Residue R398 is the Proton acceptor of the active site. E408 serves as a coordination point for IMP. E462 contributes to the K(+) binding site.

This sequence belongs to the IMPDH/GMPR family. In terms of assembly, homotetramer. K(+) is required as a cofactor.

The enzyme catalyses IMP + NAD(+) + H2O = XMP + NADH + H(+). It participates in purine metabolism; XMP biosynthesis via de novo pathway; XMP from IMP: step 1/1. Its activity is regulated as follows. Mycophenolic acid (MPA) is a non-competitive inhibitor that prevents formation of the closed enzyme conformation by binding to the same site as the amobile flap. In contrast, mizoribine monophosphate (MZP) is a competitive inhibitor that induces the closed conformation. MPA is a potent inhibitor of mammalian IMPDHs but a poor inhibitor of the bacterial enzymes. MZP is a more potent inhibitor of bacterial IMPDH. In terms of biological role, catalyzes the conversion of inosine 5'-phosphate (IMP) to xanthosine 5'-phosphate (XMP), the first committed and rate-limiting step in the de novo synthesis of guanine nucleotides, and therefore plays an important role in the regulation of cell growth. The protein is Inosine-5'-monophosphate dehydrogenase of Korarchaeum cryptofilum (strain OPF8).